The primary structure comprises 58 residues: Bowman-Birk type wound-induced trypsin inhibitor (58 aa).

Intrachain disulfides connect cysteine 4–cysteine 57, cysteine 5–cysteine 20, cysteine 8–cysteine 53, cysteine 10–cysteine 18, cysteine 27–cysteine 34, cysteine 31–cysteine 46, and cysteine 36–cysteine 44.

It belongs to the Bowman-Birk serine protease inhibitor family.

The sequence is that of Bowman-Birk type wound-induced trypsin inhibitor from Medicago sativa (Alfalfa).